A 126-amino-acid polypeptide reads, in one-letter code: Fatty acid-binding protein 2, liver (126 aa).

Cholate contacts are provided by residues 54–56, 99–101, and arginine 121; these read TPN and HIQ.

The protein belongs to the calycin superfamily. Fatty-acid binding protein (FABP) family.

Its subcellular location is the cytoplasm. Binds free fatty acids and their coenzyme A derivatives, bilirubin, and some other small molecules in the cytoplasm. May be involved in intracellular lipid transport. The specificity of axolotl L-FABP differs from that of LB-FABP. Binds 2 ligands per protein molecule. The polypeptide is Fatty acid-binding protein 2, liver (Ambystoma mexicanum (Axolotl)).